Reading from the N-terminus, the 286-residue chain is PTS system mannose-specific EIID component (286 aa).

An N-formylmethionine modification is found at Met-1. The Cytoplasmic portion of the chain corresponds to 1-17 (MSEMVDTTQTTTEKKLT). The PTS EIID domain maps to 14 to 284 (KKLTQSDIRG…GIAGYACGLL (271 aa)). An intramembrane segment occupies 18–55 (QSDIRGVFLRSNLFQGSWNFERMQALGFCFSMVPAIRR). Over 56–62 (LYPENNE) the chain is Cytoplasmic. The stretch at 63 to 95 (ARKQAIRRHLEFFNTQPFVAAPILGVTLALEEQ) is an intramembrane region. The Cytoplasmic segment spans residues 96–103 (RANGAEID). A transmembrane span lies at residues 104–143 (DGAINGIKVGLMGPLAGVGDPIFWGTVRPVFAALGAGIAM). The Periplasmic portion of the chain corresponds to 144–147 (SGSL). Residues 148–176 (LGPLLFFILFNLVRLATRYYGVAYGYSKG) are membrane-embedded. At 177 to 186 (IDIVKDMGGG) the chain is on the cytoplasmic side. Residues 187-212 (FLQKLTEGASILGLFVMGALVNKWTH) are membrane-embedded. At 213 to 244 (VNIPLVVSRITDQTGKEHVTTVQTILDQLMPG) the chain is on the periplasmic side. At 245-258 (LVPLLLTFACMWLL) the chain is embedded in the membrane. At 259–264 (RKKVNP) the chain is on the cytoplasmic side. The chain crosses the lipid bilayer at residues 265 to 283 (LWIIVGFFVIGIAGYACGL). The Periplasmic segment spans residues 284-286 (LGL).

As to quaternary structure, homotrimer of protomers that are composed of two subunits, IIC and IID.

It localises to the cell inner membrane. Functionally, the phosphoenolpyruvate-dependent sugar phosphotransferase system (sugar PTS), a major carbohydrate active transport system, catalyzes the phosphorylation of incoming sugar substrates concomitantly with their translocation across the cell membrane. The enzyme II ManXYZ PTS system is involved in mannose transport. This is PTS system mannose-specific EIID component (manZ) from Escherichia coli O6:H1 (strain CFT073 / ATCC 700928 / UPEC).